The following is a 526-amino-acid chain: Phosphoenolpyruvate carboxylase (526 aa).

This sequence belongs to the PEPCase type 2 family. As to quaternary structure, homotetramer. Requires Mg(2+) as cofactor.

It carries out the reaction oxaloacetate + phosphate = phosphoenolpyruvate + hydrogencarbonate. Catalyzes the irreversible beta-carboxylation of phosphoenolpyruvate (PEP) to form oxaloacetate (OAA), a four-carbon dicarboxylic acid source for the tricarboxylic acid cycle. In Methanosarcina barkeri (strain Fusaro / DSM 804), this protein is Phosphoenolpyruvate carboxylase.